A 423-amino-acid chain; its full sequence is Putative galacturan 1,4-alpha-galacturonidase C (423 aa).

Positions 1 to 20 (MQLRASVLLSFLGLASVGHA) are cleaved as a signal peptide. N-linked (GlcNAc...) asparagine glycosylation is found at N92, N98, N118, N156, N179, and N191. 2 PbH1 repeats span residues 215 to 236 (ATNI…AIKP) and 238 to 258 (SYNI…AIGS). D229 functions as the Proton donor in the catalytic mechanism. Cysteines 231 and 248 form a disulfide. N-linked (GlcNAc...) asparagine glycosylation is found at N245, N344, and N362. Cysteines 379 and 385 form a disulfide. N400 is a glycosylation site (N-linked (GlcNAc...) asparagine).

Belongs to the glycosyl hydrolase 28 family.

The protein resides in the secreted. The enzyme catalyses [(1-&gt;4)-alpha-D-galacturonosyl](n) + H2O = alpha-D-galacturonate + [(1-&gt;4)-alpha-D-galacturonosyl](n-1). Functionally, specific in hydrolyzing the terminal glycosidic bond of polygalacturonic acid and oligogalacturonates. The sequence is that of Putative galacturan 1,4-alpha-galacturonidase C (rgxC) from Aspergillus niger (strain ATCC MYA-4892 / CBS 513.88 / FGSC A1513).